The primary structure comprises 497 residues: 4,4'-diaponeurosporene oxygenase (497 aa).

7-19 (VIGGGLGGISAAI) contributes to the FAD binding site.

It belongs to the carotenoid/retinoid oxidoreductase family. CrtP subfamily. It depends on FAD as a cofactor.

It carries out the reaction all-trans-4,4'-diaponeurosporene + 2 AH2 + 2 O2 = 4,4'-diaponeurosporenal + 2 A + 3 H2O. It participates in carotenoid biosynthesis; staphyloxanthin biosynthesis; staphyloxanthin from farnesyl diphosphate: step 3/5. Involved in the biosynthesis of the yellow-orange carotenoid staphyloxanthin, which plays a role in the virulence via its protective function against oxidative stress. Catalyzes the oxidation of the terminal methyl side group of 4,4'-diaponeurosporene to form 4,4'-diaponeurosporen-4-al. In Staphylococcus aureus (strain bovine RF122 / ET3-1), this protein is 4,4'-diaponeurosporene oxygenase.